The sequence spans 269 residues: Formamidopyrimidine-DNA glycosylase (269 aa).

The active-site Schiff-base intermediate with DNA is the P2. The active-site Proton donor is E3. Residue K57 is the Proton donor; for beta-elimination activity of the active site. Residues H90, R109, and K150 each contribute to the DNA site. An FPG-type zinc finger spans residues 235-269; that stretch reads QVYGRKGEPCRVCGTPIAATKHAQRATFYCRHCQK. The active-site Proton donor; for delta-elimination activity is R259.

It belongs to the FPG family. In terms of assembly, monomer. Zn(2+) is required as a cofactor.

It carries out the reaction Hydrolysis of DNA containing ring-opened 7-methylguanine residues, releasing 2,6-diamino-4-hydroxy-5-(N-methyl)formamidopyrimidine.. The catalysed reaction is 2'-deoxyribonucleotide-(2'-deoxyribose 5'-phosphate)-2'-deoxyribonucleotide-DNA = a 3'-end 2'-deoxyribonucleotide-(2,3-dehydro-2,3-deoxyribose 5'-phosphate)-DNA + a 5'-end 5'-phospho-2'-deoxyribonucleoside-DNA + H(+). In terms of biological role, involved in base excision repair of DNA damaged by oxidation or by mutagenic agents. Acts as a DNA glycosylase that recognizes and removes damaged bases. Has a preference for oxidized purines, such as 7,8-dihydro-8-oxoguanine (8-oxoG). Has AP (apurinic/apyrimidinic) lyase activity and introduces nicks in the DNA strand. Cleaves the DNA backbone by beta-delta elimination to generate a single-strand break at the site of the removed base with both 3'- and 5'-phosphates. This Salmonella paratyphi B (strain ATCC BAA-1250 / SPB7) protein is Formamidopyrimidine-DNA glycosylase.